The primary structure comprises 83 residues: Kunitz serine protease inhibitor Pr-mulgin 3 (83 aa).

The signal sequence occupies residues 1–24 (MSSGGLFLLLGLLTLWEVLTPVSS). The BPTI/Kunitz inhibitor domain occupies 31–81 (CELPADSGSCKGNFQAFYYHPVHRTCLEFIYGGCEGNDNNFKTIDECKRTC). 3 cysteine pairs are disulfide-bonded: Cys31-Cys81, Cys40-Cys64, and Cys56-Cys77.

Belongs to the venom Kunitz-type family. Expressed by the venom gland.

The protein resides in the secreted. Serine protease inhibitor that acts against trypsin (EC(50)=10 nM, Ki=5nM), and plasmin (EC(50)=200 nM, Ki=100 nM). The chain is Kunitz serine protease inhibitor Pr-mulgin 3 from Pseudechis rossignolii (Papuan pigmy mulga snake).